The sequence spans 1087 residues: MNSKKIEELDKTTNHLDNSRNNMYSCTFMEKGDEDNILNSTILKMNNTEKGISFQTIEEEIKDKNKISNIPSDYAEKEKYCFNELLYTKQNGYINIIEKEDKPIQEILTDDKKNISEIDSSKSDKMDPCLSSQKVDEEYKYGDNYNINGDNPVHNSDEINEDSKCECSFFISKCDYEKDSDANTNGPKKSCKDSEENINYYNNNLLLGISENKDTLIKCDKIFERSYYSTSASTVLASNENEQNLQNISSYETVSSMNEKIKLDGNGKYEKLEKEQTYIMNKETNVINPQDYSIHDIGTYRDECISYLNKIKDIPHNIGSQINSYQNNNIIGNNNFKDKSYLIHENDFFDVETKKKNILQNYFLVNNNNEINANEDMNNRSDDLKNIEAVASDLNEIIEEDTIQKKINISKNCKIEENINMNINDHNKNAVFNFNINRQLFHDNQGDENMYKTNFNTENNKSINIINGMSKEVYEQNSGDIHAQVENINNIEQTTNNIIENNMMIIQGSDDLRFTTLNCINDNSNTDIMKCKRKIKNDENRENIMIKTDQKNIKMKDELDEDDKDELYGIPDKKRRKKNKKKKIPGRVYKVIVRGKECWRAEWLVQKNQENIEREKEESKMDRYSIMKLENTKDVDKNINKMNTPNFQKKSKQFSVSVYGYENARLFALFELIKYNSVPDSLKEEASICIHNIKRNIMNSENSSNKSFSGHFLQFLLADENNEYSSLLYKRLEDNVIQNVNKYSMHEMNNINRMNLFQTQGKEIGFRNEKYFTVQYDNENGHGNNIVDGTIWNIQNNERNLFYNNNNKCRNDYYYNNSNDIIKMKKENNEKLTTFNDNNFYNKANYINRYNNPYVSNNNPSIHNLNNLVYNINSYDFNPMHIRNGYGNDSNSTINISSPNSNYHRGFGEEKDIQKKKNFFNINNTRKYVGDINNKPMDGFKQNLFEKVLNNLENNMGNNNLYNYNSLEHHINSKVKSTYPYNNDNITNDPANTTTMISHGANNNQISNETEIRNSQQILHDNLLVYRNFMNPSSCDIGNVDKNSENDRGEKMASNFEGAFLNKSNIVFKQNANFDPFLGRNVSNINT.

Residues 586-682 constitute a DNA-binding region (AP2); the sequence is GRVYKVIVRG…IKYNSVPDSL (97 aa).

The protein belongs to the AP2/ERF transcription factor family. AP2 subfamily.

It localises to the nucleus. Its subcellular location is the chromosome. Functionally, transcription factor which binds the 5'-[TC][AC]TG[AT]AC[AG]-3' motif. During the mosquito vector stage, plays an essential role in the zygote for de novo transcription of genes required for ookinete formation. The sequence is that of Transcription factor AP2-Z from Plasmodium berghei (strain Anka).